The chain runs to 1227 residues: DNA-directed RNA polymerase subunit beta (1227 aa).

The protein belongs to the RNA polymerase beta chain family. As to quaternary structure, the RNAP catalytic core consists of 2 alpha, 1 beta, 1 beta' and 1 omega subunit. When a sigma factor is associated with the core the holoenzyme is formed, which can initiate transcription.

The enzyme catalyses RNA(n) + a ribonucleoside 5'-triphosphate = RNA(n+1) + diphosphate. In terms of biological role, DNA-dependent RNA polymerase catalyzes the transcription of DNA into RNA using the four ribonucleoside triphosphates as substrates. This Chloroflexus aurantiacus (strain ATCC 29366 / DSM 635 / J-10-fl) protein is DNA-directed RNA polymerase subunit beta.